The sequence spans 710 residues: Interferon-induced GTP-binding protein Mx2 (710 aa).

Residues 1–87 are disordered; sequence MSLSFRPLKY…RSKGPENNLY (87 aa). Polar residues-rich tracts occupy residues 39–50 and 58–79; these read QTMSPPQWQVEE and NNFS…QQRS. The Dynamin-type G domain occupies 112–383; that stretch reads DLALPAIAVI…LIWHINKSLP (272 aa). Positions 122–129 are G1 motif; the sequence is GDQSSGKS. 122–129 provides a ligand contact to GTP; it reads GDQSSGKS. The segment at 147–149 is G2 motif; that stretch reads ITR. A G3 motif region spans residues 221-224; that stretch reads DLPG. GTP is bound by residues 221-225 and 290-293; these read DLPGI and TKPD. The G4 motif stretch occupies residues 290-293; sequence TKPD. A G5 motif region spans residues 322–325; the sequence is KCRG. In terms of domain architecture, GED spans 619–710; sequence IVEIGVHLNA…ALYEFPHFKG (92 aa).

This sequence belongs to the TRAFAC class dynamin-like GTPase superfamily. Dynamin/Fzo/YdjA family.

It localises to the cytoplasm. The protein localises to the nucleus. Functionally, interferon-induced dynamin-like GTPase with antiviral activity against vesicular stomatitis virus (VSV). This chain is Interferon-induced GTP-binding protein Mx2 (MX2), found in Bubalus bubalis (Domestic water buffalo).